We begin with the raw amino-acid sequence, 322 residues long: Ferrochelatase (322 aa).

2 residues coordinate Fe cation: His194 and Glu275.

This sequence belongs to the ferrochelatase family.

The protein localises to the cytoplasm. It carries out the reaction heme b + 2 H(+) = protoporphyrin IX + Fe(2+). Its pathway is porphyrin-containing compound metabolism; protoheme biosynthesis; protoheme from protoporphyrin-IX: step 1/1. Catalyzes the ferrous insertion into protoporphyrin IX. The sequence is that of Ferrochelatase from Yersinia enterocolitica serotype O:8 / biotype 1B (strain NCTC 13174 / 8081).